Reading from the N-terminus, the 101-residue chain is PAT complex subunit Asterix (101 aa).

Residues 1 to 26 are disordered; the sequence is MADPRRPARVTRYKPPTTESNPALED. Residues 1–27 are Cytoplasmic-facing; it reads MADPRRPARVTRYKPPTTESNPALEDP. The helical transmembrane segment at 28–46 threads the bilayer; that stretch reads TPDYMNLLGMVFSMCGLML. Position 47 (Lys47) is a topological domain, lumenal. Residues 48–65 traverse the membrane as a helical segment; the sequence is LKWCAWIAVYCSFISFAN. At 66 to 69 the chain is on the cytoplasmic side; it reads SRSS. A helical membrane pass occupies residues 70 to 90; the sequence is EDTKQMMSSFMLSISAVVMSY. Topologically, residues 91–101 are lumenal; the sequence is LQNPQPMSPPW.

Belongs to the Asterix family. As to quaternary structure, component of the multi-pass translocon (MPT) complex.

The protein resides in the endoplasmic reticulum membrane. Functionally, component of the multi-pass translocon (MPT) complex that mediates insertion of multi-pass membrane proteins into the lipid bilayer of membranes. The MPT complex takes over after the SEC61 complex: following membrane insertion of the first few transmembrane segments of proteins by the SEC61 complex, the MPT complex occludes the lateral gate of the SEC61 complex to promote insertion of subsequent transmembrane regions. The sequence is that of PAT complex subunit Asterix (WDR83OS) from Gallus gallus (Chicken).